The sequence spans 155 residues: MATRNPPPQDYESDDDSYEVLDLTEYARRHQWWNRVFGHSSGPMVEKYSVATQIVMGGVTGWCAGFLFQKVGKLAATAVGGGFLLLQIASHSGYVQIDWKRVEKDVNKAKRQIKKRANKAAPEINNLIEEATEFIKQNIVISSGFVGGFLLGLAS.

The Cytoplasmic segment spans residues 1–47; sequence MATRNPPPQDYESDDDSYEVLDLTEYARRHQWWNRVFGHSSGPMVEK. Ser-13 carries the phosphoserine; by CK2 modification. A Phosphoserine; by ULK1 modification is found at Ser-17. Phosphotyrosine; by SRC is present on Tyr-18. The YXXL signature appears at 18 to 21; that stretch reads YEVL. A helical transmembrane segment spans residues 48–68; the sequence is YSVATQIVMGGVTGWCAGFLF. The Mitochondrial intermembrane segment spans residues 69 to 74; sequence QKVGKL. A helical transmembrane segment spans residues 75–95; it reads AATAVGGGFLLLQIASHSGYV. Residues 96–133 are Cytoplasmic-facing; it reads QIDWKRVEKDVNKAKRQIKKRANKAAPEINNLIEEATE. Lys-119 participates in a covalent cross-link: Glycyl lysine isopeptide (Lys-Gly) (interchain with G-Cter in ubiquitin). Residues 134–154 traverse the membrane as a helical segment; that stretch reads FIKQNIVISSGFVGGFLLGLA. Position 155 (Ser-155) is a topological domain, mitochondrial intermembrane.

The protein belongs to the FUN14 family. In terms of assembly, interacts (via YXXL motif) with MAP1 LC3 family proteins MAP1LC3A, MAP1LC3B and GABARAP. Interacts with DNM1L/DPR1. Interacts with GPX4. Post-translationally, phosphorylation at Ser-13 by CK2 and at Tyr-18 by SRC inhibits activation of mitophagy. Following hypoxia, dephosphorylated at Tyr-18, leading to interaction with MAP1 LC3 family proteins and triggering mitophagy. Dephosphorylation is mediated by PGAM5. Phosphorylated by ULK1 at Ser-17 which enhances FUNDC1 binding to LC3. In terms of processing, ubiquitinated on Lys-119. Deubiquitinated by USP19; leading to hypoxia-induced DRP1 oligomerization and GTPase activity. Widely expressed.

It localises to the mitochondrion outer membrane. Functionally, integral mitochondrial outer-membrane protein that mediates the formation of mitochondria-associated endoplasmic reticulum membranes (MAMs). In turn, mediates angiogenesis and neoangiogenesis through interference with intracellular Ca(2+) communication and regulation of the vascular endothelial growth factor receptor KDR/VEGFR2 expression at both mRNA and protein levels. Also acts as an activator of hypoxia-induced mitophagy, an important mechanism for mitochondrial quality and homeostasis, by interacting with and recruiting LC3 protein family to mitochondria. Mechanistically, recruits DRP1 at ER-mitochondria contact sites leading to DRP1 oligomerization and GTPase activity to facilitate mitochondrial fission during hypoxia. Additionally, plays a role in hepatic ferroptosis by interacting directly with glutathione peroxidase/GPX4 to facilitate its recruitment into mitochondria through TOM/TIM complex where it is degraded by mitophagy. The protein is FUN14 domain-containing protein 1 (FUNDC1) of Homo sapiens (Human).